The chain runs to 537 residues: CTP synthase (537 aa).

The interval 1-267 (MTKYIFVTGG…DQIVCDHLKL (267 aa)) is amidoligase domain. Ser-13 contacts CTP. Ser-13 provides a ligand contact to UTP. Position 14 to 19 (14 to 19 (SIGKGI)) interacts with ATP. Residue Tyr-54 coordinates L-glutamine. Residue Asp-71 coordinates ATP. Mg(2+) is bound by residues Asp-71 and Glu-141. CTP is bound by residues 148–150 (DIE), 188–193 (KTKPTQ), and Lys-224. Residues 188–193 (KTKPTQ) and Lys-224 each bind UTP. ATP is bound at residue 240–242 (RDV). Residues 292-535 (RIALVGKYVE…VTAAVKNKNQ (244 aa)) form the Glutamine amidotransferase type-1 domain. Gly-354 contacts L-glutamine. Cys-381 (nucleophile; for glutamine hydrolysis) is an active-site residue. L-glutamine contacts are provided by residues 382 to 385 (LGMQ), Glu-405, and Arg-463. Residues His-508 and Glu-510 contribute to the active site.

This sequence belongs to the CTP synthase family. As to quaternary structure, homotetramer.

The catalysed reaction is UTP + L-glutamine + ATP + H2O = CTP + L-glutamate + ADP + phosphate + 2 H(+). The enzyme catalyses L-glutamine + H2O = L-glutamate + NH4(+). It carries out the reaction UTP + NH4(+) + ATP = CTP + ADP + phosphate + 2 H(+). The protein operates within pyrimidine metabolism; CTP biosynthesis via de novo pathway; CTP from UDP: step 2/2. With respect to regulation, allosterically activated by GTP, when glutamine is the substrate; GTP has no effect on the reaction when ammonia is the substrate. The allosteric effector GTP functions by stabilizing the protein conformation that binds the tetrahedral intermediate(s) formed during glutamine hydrolysis. Inhibited by the product CTP, via allosteric rather than competitive inhibition. In terms of biological role, catalyzes the ATP-dependent amination of UTP to CTP with either L-glutamine or ammonia as the source of nitrogen. Regulates intracellular CTP levels through interactions with the four ribonucleotide triphosphates. This Streptococcus equi subsp. equi (strain 4047) protein is CTP synthase.